Reading from the N-terminus, the 549-residue chain is Pleckstrin homology domain-containing family A member 8 (549 aa).

Residues 1–93 form the PH domain; it reads MEGVLYKWTN…WLVALGTAKA (93 aa). Disordered regions lie at residues 180–245 and 257–312; these read NPDL…ENIS and QNDL…QEVQ. Residues 203–219 are compositionally biased toward basic and acidic residues; it reads KSNDPKNLHPGETRKDL. Over residues 276–288 the composition is skewed to acidic residues; sequence EPVEEQQTDGSTE. Residues 299–309 show a composition bias toward polar residues; it reads EVSMSPTQNKQ.

It is found in the cytoplasm. Its subcellular location is the golgi apparatus. The protein resides in the trans-Golgi network membrane. It localises to the membrane. Cargo transport protein that is required for apical transport from the trans-Golgi network (TGN) to the plasma membrane. The polypeptide is Pleckstrin homology domain-containing family A member 8 (plekha8) (Danio rerio (Zebrafish)).